A 162-amino-acid chain; its full sequence is General odorant-binding protein 2 (162 aa).

The N-terminal stretch at Met1–Ser18 is a signal peptide. Cystine bridges form between Cys40–Cys75, Cys71–Cys129, and Cys118–Cys138.

It belongs to the PBP/GOBP family. As to expression, antenna.

In terms of biological role, present in the aqueous fluid surrounding olfactory sensory dendrites and are thought to aid in the capture and transport of hydrophobic odorants into and through this fluid. This is General odorant-binding protein 2 from Heliothis virescens (Tobacco budworm moth).